Consider the following 191-residue polypeptide: Calcium-activated potassium channel subunit beta-1 (191 aa).

Residues 1 to 18 lie on the Cytoplasmic side of the membrane; that stretch reads MGKKLVMAQKRGETRALC. The chain crosses the membrane as a helical span at residues 19-39; sequence LGVAMVVCAAITYYILGTTVL. Topologically, residues 40–155 are extracellular; it reads PLYQKSVWTQ…VVYQRLYGPQ (116 aa). Asn-80 and Asn-142 each carry an N-linked (GlcNAc...) asparagine glycan. Residues 156–176 traverse the membrane as a helical segment; it reads ILLFSFFWPTFLLTGGLLIIA. The Cytoplasmic portion of the chain corresponds to 177–191; it reads MVKLNRSLSVLAAQK.

This sequence belongs to the KCNMB (TC 8.A.14.1) family. KCNMB1 subfamily. As to quaternary structure, interacts with KCNMA1 tetramer. There are probably 4 molecules of KCMNB1 per KCNMA1 tetramer. In terms of processing, N-glycosylated. Weakly expressed. In brain, it is expressed in a few discrete populations of neurons that also express KCNMA1.

The protein resides in the membrane. Functionally, regulatory subunit of the calcium activated potassium KCNMA1 (maxiK) channel. Modulates the calcium sensitivity and gating kinetics of KCNMA1, thereby contributing to KCNMA1 channel diversity. Increases the apparent Ca(2+)/voltage sensitivity of the KCNMA1 channel. It also modifies KCNMA1 channel kinetics and alters its pharmacological properties. It slows down the activation and the deactivation kinetics of the channel. Acts as a negative regulator of smooth muscle contraction by enhancing the calcium sensitivity to KCNMA1. Its presence is also a requirement for internal binding of the KCNMA1 channel opener dehydrosoyasaponin I (DHS-1) triterpene glycoside and for external binding of the agonist hormone 17-beta-estradiol (E2). Increases the binding activity of charybdotoxin (CTX) toxin to KCNMA1 peptide blocker by increasing the CTX association rate and decreasing the dissociation rate. The chain is Calcium-activated potassium channel subunit beta-1 (Kcnmb1) from Rattus norvegicus (Rat).